Consider the following 1295-residue polypeptide: Phosphoribosylformylglycinamidine synthase (1295 aa).

A disordered region spans residues 305-327 (WPGAATGSGGEIRDEGATGRGAK). Residues 307–318 (GAATGSGGEIRD) and A678 contribute to the ATP site. Residues E718, N722, and D884 each coordinate Mg(2+). An ATP-binding site is contributed by S886. The Glutamine amidotransferase type-1 domain maps to 1042–1295 (VAVLREQGVN…IFRNARKQLG (254 aa)). The active-site Nucleophile is the C1135. Residues H1260 and E1262 contribute to the active site.

This sequence in the N-terminal section; belongs to the FGAMS family. Monomer.

The protein localises to the cytoplasm. The catalysed reaction is N(2)-formyl-N(1)-(5-phospho-beta-D-ribosyl)glycinamide + L-glutamine + ATP + H2O = 2-formamido-N(1)-(5-O-phospho-beta-D-ribosyl)acetamidine + L-glutamate + ADP + phosphate + H(+). Its pathway is purine metabolism; IMP biosynthesis via de novo pathway; 5-amino-1-(5-phospho-D-ribosyl)imidazole from N(2)-formyl-N(1)-(5-phospho-D-ribosyl)glycinamide: step 1/2. In terms of biological role, phosphoribosylformylglycinamidine synthase involved in the purines biosynthetic pathway. Catalyzes the ATP-dependent conversion of formylglycinamide ribonucleotide (FGAR) and glutamine to yield formylglycinamidine ribonucleotide (FGAM) and glutamate. The chain is Phosphoribosylformylglycinamidine synthase from Shigella boydii serotype 4 (strain Sb227).